The sequence spans 589 residues: Mini-chromosome maintenance complex-binding protein (589 aa).

The interval 163–211 (VDEEMTDSMDSSTLEAGRNGSPFKKMKVGEATSSASESQVPQTSGIPPA) is disordered. The span at 193 to 207 (ATSSASESQVPQTSG) shows a compositional bias: polar residues.

It belongs to the MCMBP family. Interacts with the MCM complex.

Its subcellular location is the nucleus. Functionally, associated component of the MCM complex that acts as a regulator of DNA replication. Binds to the MCM complex during late S phase and may act by promoting the disassembly of the MCM complex from chromatin. Required for sister chromatid cohesion. In Arabidopsis thaliana (Mouse-ear cress), this protein is Mini-chromosome maintenance complex-binding protein (ETG1).